We begin with the raw amino-acid sequence, 161 residues long: Lipoprotein LpqH (161 aa).

A signal peptide spans 1–21; sequence MNRQLRFAVAGPEILAAVVSG. Residues 21–46 show a composition bias toward low complexity; that stretch reads GCSSGNKSAPSSSASSSSTSPSASSG. The tract at residues 21-49 is disordered; the sequence is GCSSGNKSAPSSSASSSSTSPSASSGGAA. Residue Cys22 is the site of N-palmitoyl cysteine attachment. Cys22 is lipidated: S-diacylglycerol cysteine.

This sequence belongs to the mycobacterial 19 kDa antigen family. Modified by Lgt on Cys-22 with an S-linked diacylglycerol with a mixture of C16, C18 and C19 fatty acids, signal peptide is removed by LspA, modifed by Lnt with an amide-linked mixture of C16 and C19 fatty acids.

It localises to the cell membrane. Functionally, might be involved in ligand transport. A host TLR2 agonist, modifies host gene expression in response to pathogen. In Mycobacterium avium, this protein is Lipoprotein LpqH (lpqH).